A 486-amino-acid chain; its full sequence is UDP-N-acetylmuramate--L-alanine ligase (486 aa).

129 to 135 (GTHGKTT) provides a ligand contact to ATP.

Belongs to the MurCDEF family.

The protein localises to the cytoplasm. It carries out the reaction UDP-N-acetyl-alpha-D-muramate + L-alanine + ATP = UDP-N-acetyl-alpha-D-muramoyl-L-alanine + ADP + phosphate + H(+). Its pathway is cell wall biogenesis; peptidoglycan biosynthesis. Functionally, cell wall formation. In Vibrio vulnificus (strain YJ016), this protein is UDP-N-acetylmuramate--L-alanine ligase.